We begin with the raw amino-acid sequence, 366 residues long: S-adenosylmethionine:tRNA ribosyltransferase-isomerase (366 aa).

The protein belongs to the QueA family. Monomer.

The protein localises to the cytoplasm. It catalyses the reaction 7-aminomethyl-7-carbaguanosine(34) in tRNA + S-adenosyl-L-methionine = epoxyqueuosine(34) in tRNA + adenine + L-methionine + 2 H(+). It functions in the pathway tRNA modification; tRNA-queuosine biosynthesis. Transfers and isomerizes the ribose moiety from AdoMet to the 7-aminomethyl group of 7-deazaguanine (preQ1-tRNA) to give epoxyqueuosine (oQ-tRNA). The protein is S-adenosylmethionine:tRNA ribosyltransferase-isomerase of Bradyrhizobium diazoefficiens (strain JCM 10833 / BCRC 13528 / IAM 13628 / NBRC 14792 / USDA 110).